Reading from the N-terminus, the 263-residue chain is UPF0246 protein Mmar10_0828 (263 aa).

Belongs to the UPF0246 family.

This chain is UPF0246 protein Mmar10_0828, found in Maricaulis maris (strain MCS10) (Caulobacter maris).